The following is a 631-amino-acid chain: Polyadenylate-binding protein, cytoplasmic and nuclear (631 aa).

The tract at residues 1 to 56 (MSDLQESLEKLSINEKAPQAPADDATPSNTTTLEKESSESAAAAAGEGAGEEGEEA) is disordered. 4 RRM domains span residues 58–136 (ASLY…WSQR), 146–223 (GNIF…KHVS), 239–316 (TNVY…RAQK), and 342–419 (VNLF…LAQR). The segment at 518–545 (GGEFNGPNGQRQQRGAYPPNRNQKGGRP) is disordered. A PABC domain is found at 545–626 (PQRDLAAIIS…ALTAFEEYKK (82 aa)).

This sequence belongs to the polyadenylate-binding protein type-1 family.

It localises to the cytoplasm. The protein localises to the nucleus. Binds the poly(A) tail of mRNA. Appears to be an important mediator of the multiple roles of the poly(A) tail in mRNA biogenesis, stability and translation. In the nucleus, involved in both mRNA cleavage and polyadenylation. Is also required for efficient mRNA export to the cytoplasm. Acts in concert with a poly(A)-specific nuclease (PAN) to affect poly(A) tail shortening, which may occur concomitantly with either nucleocytoplasmic mRNA transport or translational initiation. In the cytoplasm, stimulates translation initiation and regulates mRNA decay through translation termination-coupled poly(A) shortening, probably mediated by PAN. This chain is Polyadenylate-binding protein, cytoplasmic and nuclear (PAB1), found in Meyerozyma guilliermondii (strain ATCC 6260 / CBS 566 / DSM 6381 / JCM 1539 / NBRC 10279 / NRRL Y-324) (Yeast).